Reading from the N-terminus, the 746-residue chain is MQAKKRYFILLSAGSCLALLFYFGGLQFRASRSHSRREEHSGRNGLHHPSPDHFWPRFPDALRPFVPWDQLENEDSSVHVSPRQKREANSSIYKGKKCRMESCFDFTLCKKNGFKVYVYPQQKGEKIAESYQNILAAIEGSRFYTSDPSQACLFVLSLDTLDRDQLSPQYVHNLRSKVQSLHLWNNGRNHLIFNLYSGTWPDYTEDVGFDIGQAMLAKASISTENFRPNFDVSIPLFSKDHPRTGGERGFLKFNTIPPLRKYMLVFKGKRYLTGIGSDTRNALYHVHNGEDVVLLTTCKHGKDWQKHKDSRCDRDNTEYEKYDYREMLHNATFCLVPRGRRLGSFRFLEALQAACVPVMLSNGWELPFSEVINWNQAAVIGDERLLLQIPSTIRSIHQDKILALRQQTQFLWEAYFSSVEKIVLTTLEIIQDRIFKHISRNSLIWNKHPGGLFVLPQYSSYLGDFPYYYANLGLKPPSKFTAVIHAVTPLVSQSQPVLKLLVAAAKSQYCAQIIVLWNCDKPLPAKHRWPATSVPVIVIEGESKVMSSRFLPYDNIITDAVLSLDEDTVLSTTEVDFAFTVWQSFPERIVGYPARSHFWDNSKERWGYTSKWTNDYSMVLTGAAIYHKYYHYLYTHYLPASLKNMVDQLANCEDILMNFLVSAVTKLPPIKVTQKKQYKETMMGQTSRASRWADPDHFAQRQSCMNTFASWFGYMPLIHSQMRLDPVLFKDQVSILRKKYRDIERL.

The Cytoplasmic portion of the chain corresponds to 1–7 (MQAKKRY). The helical; Signal-anchor for type II membrane protein transmembrane segment at 8-28 (FILLSAGSCLALLFYFGGLQF) threads the bilayer. Residues 29–746 (RASRSHSRRE…RKKYRDIERL (718 aa)) are Lumenal-facing. Asparagine 89 carries an N-linked (GlcNAc...) asparagine glycan. 2 disulfides stabilise this stretch: cysteine 98–cysteine 103 and cysteine 109–cysteine 152. Leucine 166 and tyrosine 203 together coordinate a protein. Lysine 267, lysine 269, tyrosine 271, and arginine 280 together coordinate UDP. Cysteine 298 and cysteine 312 are disulfide-bonded. Histidine 300 lines the a protein pocket. 2 residues coordinate UDP: tyrosine 319 and tyrosine 324. An N-linked (GlcNAc...) asparagine glycan is attached at asparagine 330. 2 cysteine pairs are disulfide-bonded: cysteine 334-cysteine 355 and cysteine 652-cysteine 704. 2 residues coordinate UDP: arginine 346 and glutamate 349.

Belongs to the glycosyltransferase 47 family. As to quaternary structure, part of the heparan sulfate polymerase, a dimeric complex composed of EXT1 and EXT2. Could also form homooligomeric complexes. Interacts with NDST1. N-glycosylated.

It localises to the golgi apparatus membrane. The protein resides in the golgi apparatus. It is found in the cis-Golgi network membrane. Its subcellular location is the endoplasmic reticulum membrane. It catalyses the reaction 3-O-{alpha-D-GlcNAc-[(1-&gt;4)-beta-D-GlcA-(1-&gt;4)-alpha-D-GlcNAc](n)-(1-&gt;4)-beta-D-GlcA-(1-&gt;3)-beta-D-Gal-(1-&gt;3)-beta-D-Gal-(1-&gt;4)-beta-D-Xyl}-L-seryl-[protein] + UDP-alpha-D-glucuronate = 3-O-{[(1-&gt;4)-beta-D-GlcA-(1-&gt;4)-alpha-D-GlcNAc](n+1)-(1-&gt;4)-beta-D-GlcA-(1-&gt;3)-beta-D-Gal-(1-&gt;3)-beta-D-Gal-(1-&gt;4)-beta-D-Xyl}-L-seryl-[protein] + UDP + H(+). It functions in the pathway protein modification; protein glycosylation. Glycosyltransferase forming with EXT2 the heterodimeric heparan sulfate polymerase which catalyzes the elongation of the heparan sulfate glycan backbone. Glycan backbone extension consists in the alternating transfer of (1-&gt;4)-beta-D-GlcA and (1-&gt;4)-alpha-D-GlcNAc residues from their respective UDP-sugar donors. Both EXT1 and EXT2 are required for the full activity of the polymerase since EXT1 bears the N-acetylglucosaminyl-proteoglycan 4-beta-glucuronosyltransferase activity within the complex while EXT2 carries the glucuronosyl-N-acetylglucosaminyl-proteoglycan 4-alpha-N-acetylglucosaminyltransferase activity. Heparan sulfate proteoglycans are ubiquitous components of the extracellular matrix and play an important role in tissue homeostasis and signaling. The sequence is that of Exostosin-1 (EXT1) from Bos taurus (Bovine).